The sequence spans 136 residues: Heme-binding protein Rv0203 (136 aa).

A signal peptide spans 1-27 (MKTGTATTRRRLLAVLIALALPGAAVA). C41 and C115 form a disulfide bridge. Residues Y60, H64, and H90 each coordinate heme.

As to quaternary structure, dimer of dimers.

The protein localises to the secreted. Part of a heme-iron acquisition system. Acts by binding heme and delivering it to the membrane proteins MmpL3 and MmpL11. Can use free heme or heme from host hemoglobin. This Mycobacterium tuberculosis (strain ATCC 25618 / H37Rv) protein is Heme-binding protein Rv0203.